A 155-amino-acid chain; its full sequence is Large ribosomal subunit protein uL13 (155 aa).

Belongs to the universal ribosomal protein uL13 family. In terms of assembly, part of the 50S ribosomal subunit.

Its function is as follows. This protein is one of the early assembly proteins of the 50S ribosomal subunit, although it is not seen to bind rRNA by itself. It is important during the early stages of 50S assembly. In Rickettsia rickettsii (strain Iowa), this protein is Large ribosomal subunit protein uL13.